The following is a 424-amino-acid chain: Bone morphogenetic protein 10 (424 aa).

The signal sequence occupies residues 1–21 (MGSLVLTLCALFCLAAYLVSG). The propeptide occupies 22–316 (SPIMNLEQSP…IYDSTARIRR (295 aa)). Residues Asn67 and Asn131 are each glycosylated (N-linked (GlcNAc...) asparagine). Cystine bridges form between Cys323/Cys389, Cys352/Cys421, and Cys356/Cys423.

The protein belongs to the TGF-beta family. Homodimer; disulfide-linked. Interacts with FBN1 (via N-terminal domain) and FBN2. Interacts with ENG. As to expression, detected in mammary epithelia (at protein level).

The protein localises to the secreted. In terms of biological role, required for maintaining the proliferative activity of embryonic cardiomyocytes by preventing premature activation of the negative cell cycle regulator CDKN1C/p57KIP and maintaining the required expression levels of cardiogenic factors such as MEF2C and NKX2-5. Acts as a ligand for ACVRL1/ALK1, BMPR1A/ALK3 and BMPR1B/ALK6, leading to activation of SMAD1, SMAD5 and SMAD8 transcription factors. Inhibits endothelial cell migration and growth. May reduce cell migration and cell matrix adhesion in breast cancer cell lines. The protein is Bone morphogenetic protein 10 (BMP10) of Homo sapiens (Human).